Reading from the N-terminus, the 171-residue chain is Shikimate kinase (171 aa).

G13 to T18 serves as a coordination point for ATP. S17 serves as a coordination point for Mg(2+). Residues D35, R59, and G81 each contribute to the substrate site. Position 118 (R118) interacts with ATP. R136 serves as a coordination point for substrate. ATP is bound at residue R153.

It belongs to the shikimate kinase family. Monomer. Requires Mg(2+) as cofactor.

It is found in the cytoplasm. The enzyme catalyses shikimate + ATP = 3-phosphoshikimate + ADP + H(+). It functions in the pathway metabolic intermediate biosynthesis; chorismate biosynthesis; chorismate from D-erythrose 4-phosphate and phosphoenolpyruvate: step 5/7. Functionally, catalyzes the specific phosphorylation of the 3-hydroxyl group of shikimic acid using ATP as a cosubstrate. This chain is Shikimate kinase, found in Streptomyces coelicolor (strain ATCC BAA-471 / A3(2) / M145).